The primary structure comprises 94 residues: Alpha-conotoxin-like Vt20.1 (94 aa).

The first 25 residues, 1–25 (MPKLAVVLLVLLILPLSYFDAGGQA), serve as a signal peptide directing secretion. Residues 26-44 (VQGDWRGNRLARDLQRGGR) constitute a propeptide that is removed on maturation. A 4-carboxyglutamate mark is found at Glu47 and Glu49. Intrachain disulfides connect Cys63-Cys72, Cys68-Cys80, Cys73-Cys90, and Cys78-Cys92.

Belongs to the conotoxin D superfamily. Hetero-, homo- or pseudo-homodimer (identical sequence, different post-translational modifications). As to expression, expressed by the venom duct.

It is found in the secreted. Functionally, alpha-conotoxins act on postsynaptic membranes, they bind to the nicotinic acetylcholine receptors (nAChR) and thus inhibit them. Through its two C-terminal domains, this homodimeric protein would bind to two nAChR allosteric sites, located outside the nAChR C-loop of the principal binding face and at the adjacent binding interface in a clockwise direction. This toxin specifically blocks mammalian neuronal nAChR of the alpha-7/CHRNA7, alpha-3-beta-2/CHRNA3-CHRNB2 and alpha-4-beta-2/CHRNA4-CHRNB2 subtypes. In Conus planorbis (Planorbis cone), this protein is Alpha-conotoxin-like Vt20.1.